A 559-amino-acid chain; its full sequence is MNFNSSYNLTFNDVFFSSSSSSDPLVSRRLFLLRDVQILELLIAIFVFVAIHALRQKKYQGLPVWPFLGMLPSLAFGLRGNIYEWLSDVLCLQNGTFQFRGPWFSSLNSTITCDPRNVEHLLKNRFSVFPKGSYFRDNLRDLLGDGIFNADDETWQRQRKTASIEFHSAKFRQLTTQSLFELVHKRLLPVLETSVKSSSPIDLQDVLLRLTFDNVCMIAFGVDPGCLGPDQPVIPFAKAFEDATEAAVVRFVMPTCVWKFMRYLDIGTEKKLKESIKGVDDFADEVIRTRKKELSLEGETTKRSDLLTVFMGLRDEKGESFSDKFLRDICVNFILAGRDTSSVALSWFFWLLEKNPEVEEKIMVEMCKILRQRDDHGNAEKSDYEPVFGPEEIKKMDYLQAALSEALRLYPSVPVDHKEVQEDDVFPDGTMLKKGDKVIYAIYAMGRMEAIWGKDCLEFRPERWLRDGRFMSESAYKFTAFNGGPRLCLGKDFAYYQMKSTAAAIVYRYKVKVVNGHKVEPKLALTMYMKHGLMVNLINRSVSEIDQYYAKSFDEGYIN.

Residues 31–51 (FLLRDVQILELLIAIFVFVAI) form a helical membrane-spanning segment. Position 488 (Cys488) interacts with heme.

Belongs to the cytochrome P450 family. The cofactor is heme. In terms of tissue distribution, expressed in roots endodermis, anthers, stigmas, stomata of young pedicels of inflorescences, the placenta region of siliques, at the level of the hilum in matures seeds, at the junction of siliques to pedicels where abscission of floral parts takes place and in nectary glands.

Its subcellular location is the endoplasmic reticulum membrane. Functionally, involved in very long chain fatty acids (VLCFA) omega-hydroxylation. Required for the synthesis of saturated VLCFA alpha, omega-bifunctional suberin monomers. The protein is Cytochrome P450 86B1 (CYP86B1) of Arabidopsis thaliana (Mouse-ear cress).